The following is a 366-amino-acid chain: MGLLEVLDPEDLPKMSTWYALVPRGEGPSARVGHTCMYVSSSEDSSKGKILILGGADPSGCYSDTHIIDLDNHEWDNPDSEGLLPRYEHASFISASNPGNIWVFAGAEQAENRNCVQVLNPGAASWKSPKVMGTPPSPRTFHTSSAAIEDKLYVFGGGEKGAEPVADTNLYIYDAATMTWTQPVTSGDPPQARHGHVLTALGTKLFVHGGMAGSTFFKDMFCIDTDTMKWERLKTKGDLPPACAAHSSVAWKSYIYIFGGMTSTGATNSMYRYNTETLLWKQLKFDSACPPARLDHSMCLLPWKTRTNTDNAEKLPCKAKEESNLKECSSATSKTLEQGIVHLCFIFGGMDTDGELHSDCCVTILQ.

Kelch repeat units follow at residues 49-95 (KILI…FISA), 100-146 (NIWV…TSSA), 151-200 (KLYV…VLTA), 204-253 (KLFV…AWKS), 254-303 (YIYI…LLPW), and 343-366 (LCFI…TILQ).

Rab9 effector required for endosome to trans-Golgi network (TGN) transport. The protein is Rab9 effector protein with kelch motifs (rabepk) of Xenopus laevis (African clawed frog).